A 154-amino-acid polypeptide reads, in one-letter code: Interleukin-2 (154 aa).

A signal peptide spans 1-20; sequence MYKMQLLSCIALTLALVANG. O-linked (GalNAc...) threonine glycosylation is present at Thr23. Cys78 and Cys126 are oxidised to a cystine.

Belongs to the IL-2 family.

It is found in the secreted. Its function is as follows. Cytokine produced by activated CD4-positive helper T-cells and to a lesser extend activated CD8-positive T-cells and natural killer (NK) cells that plays pivotal roles in the immune response and tolerance. Binds to a receptor complex composed of either the high-affinity trimeric IL-2R (IL2RA/CD25, IL2RB/CD122 and IL2RG/CD132) or the low-affinity dimeric IL-2R (IL2RB and IL2RG). Interaction with the receptor leads to oligomerization and conformation changes in the IL-2R subunits resulting in downstream signaling starting with phosphorylation of JAK1 and JAK3. In turn, JAK1 and JAK3 phosphorylate the receptor to form a docking site leading to the phosphorylation of several substrates including STAT5. This process leads to activation of several pathways including STAT, phosphoinositide-3-kinase/PI3K and mitogen-activated protein kinase/MAPK pathways. Functions as a T-cell growth factor and can increase NK-cell cytolytic activity as well. Promotes strong proliferation of activated B-cells and subsequently immunoglobulin production. Plays a pivotal role in regulating the adaptive immune system by controlling the survival and proliferation of regulatory T-cells, which are required for the maintenance of immune tolerance. Moreover, participates in the differentiation and homeostasis of effector T-cell subsets, including Th1, Th2, Th17 as well as memory CD8-positive T-cells. The sequence is that of Interleukin-2 (IL2) from Delphinapterus leucas (Beluga whale).